A 342-amino-acid chain; its full sequence is Predicted GPI-anchored protein 54 (342 aa).

An N-terminal signal peptide occupies residues 1–16 (MRANYLLLLAATAVQA). N-linked (GlcNAc...) asparagine glycosylation is found at Asn25, Asn105, and Asn151. Residue Gly314 is the site of GPI-anchor amidated glycine attachment. Positions 315-342 (ASQSHPISSYSNYTISDYAPPISSYYSL) are cleaved as a propeptide — removed in mature form. Residue Asn326 is glycosylated (N-linked (GlcNAc...) asparagine).

The protein localises to the cell membrane. The sequence is that of Predicted GPI-anchored protein 54 (PGA54) from Candida albicans (strain SC5314 / ATCC MYA-2876) (Yeast).